The sequence spans 227 residues: Zinc finger protein 511 (227 aa).

3 C2H2-type zinc fingers span residues 80–105, 107–130, and 144–169; these read FTCQ…HMMH, NTCS…LEWH, and YQCL…VRLH. Positions 180–204 are disordered; that stretch reads PKTNRGPAMPAAADAATRAPTDDSD. The segment covering 186-198 has biased composition (low complexity); it reads PAMPAAADAATRA.

Belongs to the krueppel C2H2-type zinc-finger protein family.

It is found in the nucleus. In terms of biological role, may be involved in transcriptional regulation. The chain is Zinc finger protein 511 (Znf511) from Mus musculus (Mouse).